The chain runs to 232 residues: Peroxiredoxin (232 aa).

Residues 6–161 (PSIGEKFPEI…ILRLIESLQI (156 aa)) form the Thioredoxin domain. Cys-48 functions as the Cysteine sulfenic acid (-SOH) intermediate in the catalytic mechanism. Arg-124 lines the substrate pocket. An intrachain disulfide couples Cys-203 to Cys-209.

It belongs to the peroxiredoxin family. Prx6 subfamily. In terms of assembly, homodecamer. Pentamer of dimers that assemble into a ring structure.

It is found in the cytoplasm. The enzyme catalyses a hydroperoxide + [thioredoxin]-dithiol = an alcohol + [thioredoxin]-disulfide + H2O. Its function is as follows. Thiol-specific peroxidase that catalyzes the reduction of hydrogen peroxide and organic hydroperoxides to water and alcohols, respectively. Plays a role in cell protection against oxidative stress by detoxifying peroxides. This chain is Peroxiredoxin, found in Hyperthermus butylicus (strain DSM 5456 / JCM 9403 / PLM1-5).